The chain runs to 208 residues: HTLV-1 basic zipper factor (208 aa).

The interval 59–93 (RLRWGPVGEEAPPRGETHRDRQRRAEEKRKRKRER) is disordered. The span at 69 to 86 (APPRGETHRDRQRRAEEK) shows a compositional bias: basic and acidic residues. 3 short sequence motifs (nuclear localization signal) span residues 86–91 (KRKRKR), 115–119 (RRRRA), and 136–140 (RRERK). Residues 125-143 (DRARRKLEEEERRERKWRQ) show a composition bias toward basic and acidic residues. The disordered stretch occupies residues 125–160 (DRARRKLEEEERRERKWRQTEQGAKQRSARKEKMTE).

This sequence belongs to the HTLV-1 HBZ protein family. In terms of assembly, interacts with host ATF4; this interaction inhibits viral RNA transcriptional activation by preventing ATF4 binding to Tax-responsive elements. Interacts with host CREB1; this interaction inhibits host CREB1 transcriptional activity. Interacts with host JUN, JUNB and JUND. Interacts with host EP300.

The protein resides in the host nucleus. Contributes to the regulation of viral RNA transcription by interacting with host proteins involved in transcriptional activation such as ATF4, or CREB1, and by inhibiting their activity. Additionally, HBZ suppresses host NF-kappa-B-driven transcription mediated by host RELA as well as transcription of some classical NF-kappa-B target genes, including IL8, IL2RA, IRF4, VCAM1, and VEGFA. The polypeptide is HTLV-1 basic zipper factor (HBZ) (Human T-cell leukemia virus 1 (isolate Melanesia mel5 subtype C) (HTLV-1)).